The primary structure comprises 132 residues: Small ribosomal subunit protein bS6 (132 aa).

The tract at residues 99–132 (ASPMVKAKDERRGDRREDFANETADDADAGDSEE) is disordered. The span at 104 to 117 (KAKDERRGDRREDF) shows a compositional bias: basic and acidic residues. Positions 121–132 (TADDADAGDSEE) are enriched in acidic residues.

Belongs to the bacterial ribosomal protein bS6 family.

Binds together with bS18 to 16S ribosomal RNA. The sequence is that of Small ribosomal subunit protein bS6 from Serratia proteamaculans (strain 568).